We begin with the raw amino-acid sequence, 103 residues long: Large ribosomal subunit protein uL24 (103 aa).

It belongs to the universal ribosomal protein uL24 family. Part of the 50S ribosomal subunit.

One of two assembly initiator proteins, it binds directly to the 5'-end of the 23S rRNA, where it nucleates assembly of the 50S subunit. In terms of biological role, one of the proteins that surrounds the polypeptide exit tunnel on the outside of the subunit. The sequence is that of Large ribosomal subunit protein uL24 from Listeria monocytogenes serotype 4a (strain HCC23).